Reading from the N-terminus, the 576-residue chain is Proline--tRNA ligase (576 aa).

This sequence belongs to the class-II aminoacyl-tRNA synthetase family. ProS type 1 subfamily. As to quaternary structure, homodimer.

It is found in the cytoplasm. The catalysed reaction is tRNA(Pro) + L-proline + ATP = L-prolyl-tRNA(Pro) + AMP + diphosphate. In terms of biological role, catalyzes the attachment of proline to tRNA(Pro) in a two-step reaction: proline is first activated by ATP to form Pro-AMP and then transferred to the acceptor end of tRNA(Pro). As ProRS can inadvertently accommodate and process non-cognate amino acids such as alanine and cysteine, to avoid such errors it has two additional distinct editing activities against alanine. One activity is designated as 'pretransfer' editing and involves the tRNA(Pro)-independent hydrolysis of activated Ala-AMP. The other activity is designated 'posttransfer' editing and involves deacylation of mischarged Ala-tRNA(Pro). The misacylated Cys-tRNA(Pro) is not edited by ProRS. The chain is Proline--tRNA ligase from Leptospira interrogans serogroup Icterohaemorrhagiae serovar copenhageni (strain Fiocruz L1-130).